We begin with the raw amino-acid sequence, 174 residues long: ATP synthase subunit delta (174 aa).

This sequence belongs to the ATPase delta chain family. As to quaternary structure, F-type ATPases have 2 components, F(1) - the catalytic core - and F(0) - the membrane proton channel. F(1) has five subunits: alpha(3), beta(3), gamma(1), delta(1), epsilon(1). F(0) has three main subunits: a(1), b(2) and c(10-14). The alpha and beta chains form an alternating ring which encloses part of the gamma chain. F(1) is attached to F(0) by a central stalk formed by the gamma and epsilon chains, while a peripheral stalk is formed by the delta and b chains.

It localises to the cell inner membrane. F(1)F(0) ATP synthase produces ATP from ADP in the presence of a proton or sodium gradient. F-type ATPases consist of two structural domains, F(1) containing the extramembraneous catalytic core and F(0) containing the membrane proton channel, linked together by a central stalk and a peripheral stalk. During catalysis, ATP synthesis in the catalytic domain of F(1) is coupled via a rotary mechanism of the central stalk subunits to proton translocation. In terms of biological role, this protein is part of the stalk that links CF(0) to CF(1). It either transmits conformational changes from CF(0) to CF(1) or is implicated in proton conduction. This chain is ATP synthase subunit delta, found in Helicobacter hepaticus (strain ATCC 51449 / 3B1).